A 433-amino-acid chain; its full sequence is Phosphomethylpyrimidine synthase (433 aa).

Residues asparagine 66, methionine 94, tyrosine 123, histidine 162, serine 184–glycine 186, aspartate 225–arginine 228, and glutamate 264 each bind substrate. Histidine 268 serves as a coordination point for Zn(2+). Residue tyrosine 291 coordinates substrate. Position 332 (histidine 332) interacts with Zn(2+). The [4Fe-4S] cluster site is built by cysteine 408, cysteine 411, and cysteine 415.

This sequence belongs to the ThiC family. [4Fe-4S] cluster serves as cofactor.

The enzyme catalyses 5-amino-1-(5-phospho-beta-D-ribosyl)imidazole + S-adenosyl-L-methionine = 4-amino-2-methyl-5-(phosphooxymethyl)pyrimidine + CO + 5'-deoxyadenosine + formate + L-methionine + 3 H(+). The protein operates within cofactor biosynthesis; thiamine diphosphate biosynthesis. Functionally, catalyzes the synthesis of the hydroxymethylpyrimidine phosphate (HMP-P) moiety of thiamine from aminoimidazole ribotide (AIR) in a radical S-adenosyl-L-methionine (SAM)-dependent reaction. The chain is Phosphomethylpyrimidine synthase from Saccharolobus islandicus (strain M.16.27) (Sulfolobus islandicus).